A 498-amino-acid polypeptide reads, in one-letter code: Glutamyl-tRNA(Gln) amidotransferase subunit A (498 aa).

Residues K85 and S160 each act as charge relay system in the active site. Catalysis depends on S184, which acts as the Acyl-ester intermediate.

This sequence belongs to the amidase family. GatA subfamily. As to quaternary structure, heterotrimer of A, B and C subunits.

It catalyses the reaction L-glutamyl-tRNA(Gln) + L-glutamine + ATP + H2O = L-glutaminyl-tRNA(Gln) + L-glutamate + ADP + phosphate + H(+). Allows the formation of correctly charged Gln-tRNA(Gln) through the transamidation of misacylated Glu-tRNA(Gln) in organisms which lack glutaminyl-tRNA synthetase. The reaction takes place in the presence of glutamine and ATP through an activated gamma-phospho-Glu-tRNA(Gln). The polypeptide is Glutamyl-tRNA(Gln) amidotransferase subunit A (Mycolicibacterium vanbaalenii (strain DSM 7251 / JCM 13017 / BCRC 16820 / KCTC 9966 / NRRL B-24157 / PYR-1) (Mycobacterium vanbaalenii)).